We begin with the raw amino-acid sequence, 363 residues long: Chalcone synthase B (363 aa).

Cysteine 170 is an active-site residue.

Belongs to the thiolase-like superfamily. Chalcone/stilbene synthases family.

It catalyses the reaction (E)-4-coumaroyl-CoA + 3 malonyl-CoA + 3 H(+) = 2',4,4',6'-tetrahydroxychalcone + 3 CO2 + 4 CoA. It functions in the pathway secondary metabolite biosynthesis; flavonoid biosynthesis. In terms of biological role, the primary product of this enzyme is 4,2',4',6'-tetrahydroxychalcone (also termed naringenin-chalcone or chalcone) which can under specific conditions spontaneously isomerize into naringenin. The polypeptide is Chalcone synthase B (CHSB) (Ipomoea cordatotriloba (Tievine)).